Consider the following 649-residue polypeptide: Echinoderm microtubule-associated protein-like 2 (649 aa).

The tract at residues 10 to 649 (KEVIFSMEEG…DTSVLQWRVA (640 aa)) is tandem atypical propeller in EMLs. 12 WD repeats span residues 56 to 93 (KLDWVYGYRGRDCRANLYLLPTGEVVYFVASVAVLYSV), 97 to 144 (RQRH…VWDS), 151 to 192 (HVLG…VWDW), 195 to 234 (ESKVVDSKCSNEAVLVATFHPTDPSLLITCGKSHIYFWSL), 241 to 280 (KRQGLFEKHEKPKYVLCVTFLEGGDVVTGDSGGNLYVWGK), 285 to 323 (ITQEVQGAHDGGVFALCALRDGTLVSGGGRDRRVVLWGS), 369 to 406 (FSLLVQGHVEELWGLATHPSRAQFVTCGQDKLVHLWSS), 410 to 447 (QPVWSRSIEDPARSAGFHPSGSVLAVGTVTGRWLLLDT), 452 to 489 (LVAIHTDGNEQISVVSFSPDGAYLAVGSHDNLVYVYTV), 495 to 535 (KVSR…YWDP), 564 to 602 (FGIWPEGADGTDINAVARSHDGKLLVSADDFGKVHLFSY), and 609 to 648 (ALSHKYGGHSSHVTNVAFLWDDSMALTTGGKDTSVLQWRV). The stretch at 65–106 (GRDCRANLYLLPTGEVVYFVASVAVLYSVEEQRQRHYLGHND) forms a coiled coil.

The protein belongs to the WD repeat EMAP family. In terms of assembly, interacts with GRID2 and may also interact with GRID1. Interacts with EML3. Binds unpolymerized tubulins via its WD repeat region.

It is found in the cytoplasm. The protein resides in the cytoskeleton. Its subcellular location is the spindle. Tubulin binding protein that inhibits microtubule nucleation and growth, resulting in shorter microtubules. The sequence is that of Echinoderm microtubule-associated protein-like 2 (Eml2) from Mus musculus (Mouse).